Here is a 743-residue protein sequence, read N- to C-terminus: Mitochondrial exoribonuclease DSS-1 (743 aa).

The transit peptide at 1-67 (MTPRRVAKLV…KELLHLQRSL (67 aa)) directs the protein to the mitochondrion. The RNB domain maps to 186 to 542 (THNPAYAIDS…VHHQLKVWLW (357 aa)). Residues 320 to 357 (VGNQHHHTERESTQASPAKREEGKKGMVASGGTSSCRP) are disordered. A compositionally biased stretch (basic and acidic residues) spans 325–344 (HHTERESTQASPAKREEGKK).

Belongs to the RNR ribonuclease family. As to quaternary structure, component of the mitochondrial 3' processome (MPsome) complex composed at least of terminal uridylyltransferase KRET1/TUT1, 3'-5' exonuclease DSS1, MPSS1, MPSS2 and MPSS3. Within the complex, interacts with KRET1 and MPSS2. Component of the mitochondrial degradosome complex composed at least of 3'-5' exonuclease DSS1 and helicase SUV3. Within the complex, interacts with helicase SUV3.

The protein resides in the mitochondrion. The catalysed reaction is Exonucleolytic cleavage in the 3'- to 5'-direction to yield nucleoside 5'-phosphates.. 3'-5'exoribonuclease which is involved in the post-transcriptional processing, editing and degradation of mitochondrial RNAs, including mRNAs, rRNAs and guided RNAs (gRNA). As part of the mitochondrial 3' processome (MPsome), involved in the maturation of guided RNA (gRNA) precursors by catalyzing the processive 3'-5' degradation of uridylated gRNA precursors. Plays a role in the degradation of 12S rRNA processing intermediates and maturation by-products. This Trypanosoma brucei brucei protein is Mitochondrial exoribonuclease DSS-1.